A 178-amino-acid chain; its full sequence is uncharacterized protein (178 aa).

The signal sequence occupies residues 1 to 20; sequence MKKLLVASLALLILTPVALA.

This is an uncharacterized protein from Archaeoglobus fulgidus (strain ATCC 49558 / DSM 4304 / JCM 9628 / NBRC 100126 / VC-16).